The chain runs to 371 residues: DNA repair and recombination protein rti1 (371 aa).

The tract at residues 346–371 (IDHNRSMPIRRPSLTSNNSANTFSTK) is disordered. Positions 358–371 (SLTSNNSANTFSTK) are enriched in polar residues.

Belongs to the RAD52 family. Interacts with rph51 and rph54.

Active in the repair of DNA damage and in mating-type switching. Probably involved in the repair of DNA double-strands breaks. Has a role in promoting S phase completion. In Schizosaccharomyces pombe (strain 972 / ATCC 24843) (Fission yeast), this protein is DNA repair and recombination protein rti1 (rti1).